A 419-amino-acid polypeptide reads, in one-letter code: Serine hydroxymethyltransferase (419 aa).

(6S)-5,6,7,8-tetrahydrofolate-binding positions include Leu121 and 125-127 (GHL). The residue at position 231 (Lys231) is an N6-(pyridoxal phosphate)lysine.

This sequence belongs to the SHMT family. As to quaternary structure, homodimer. The cofactor is pyridoxal 5'-phosphate.

Its subcellular location is the cytoplasm. It carries out the reaction (6R)-5,10-methylene-5,6,7,8-tetrahydrofolate + glycine + H2O = (6S)-5,6,7,8-tetrahydrofolate + L-serine. It participates in one-carbon metabolism; tetrahydrofolate interconversion. It functions in the pathway amino-acid biosynthesis; glycine biosynthesis; glycine from L-serine: step 1/1. Functionally, catalyzes the reversible interconversion of serine and glycine with tetrahydrofolate (THF) serving as the one-carbon carrier. This reaction serves as the major source of one-carbon groups required for the biosynthesis of purines, thymidylate, methionine, and other important biomolecules. Also exhibits THF-independent aldolase activity toward beta-hydroxyamino acids, producing glycine and aldehydes, via a retro-aldol mechanism. This is Serine hydroxymethyltransferase from Phytoplasma mali (strain AT).